The sequence spans 403 residues: Dual-specificity RNA methyltransferase RlmN (403 aa).

E126 (proton acceptor) is an active-site residue. The Radical SAM core domain occupies 132-375 (ETDRGTLCVS…VRTPRGRDIL (244 aa)). A disulfide bridge links C139 with C378. Residues C146, C150, and C153 each coordinate [4Fe-4S] cluster. S-adenosyl-L-methionine is bound by residues 204–205 (GE), S236, 258–260 (SLH), and N335. Residue C378 is the S-methylcysteine intermediate of the active site.

This sequence belongs to the radical SAM superfamily. RlmN family. It depends on [4Fe-4S] cluster as a cofactor.

The protein localises to the cytoplasm. The enzyme catalyses adenosine(2503) in 23S rRNA + 2 reduced [2Fe-2S]-[ferredoxin] + 2 S-adenosyl-L-methionine = 2-methyladenosine(2503) in 23S rRNA + 5'-deoxyadenosine + L-methionine + 2 oxidized [2Fe-2S]-[ferredoxin] + S-adenosyl-L-homocysteine. It carries out the reaction adenosine(37) in tRNA + 2 reduced [2Fe-2S]-[ferredoxin] + 2 S-adenosyl-L-methionine = 2-methyladenosine(37) in tRNA + 5'-deoxyadenosine + L-methionine + 2 oxidized [2Fe-2S]-[ferredoxin] + S-adenosyl-L-homocysteine. Functionally, specifically methylates position 2 of adenine 2503 in 23S rRNA and position 2 of adenine 37 in tRNAs. m2A2503 modification seems to play a crucial role in the proofreading step occurring at the peptidyl transferase center and thus would serve to optimize ribosomal fidelity. The polypeptide is Dual-specificity RNA methyltransferase RlmN (Bradyrhizobium sp. (strain BTAi1 / ATCC BAA-1182)).